Reading from the N-terminus, the 326-residue chain is Zinc finger protein 830 (326 aa).

A compositionally biased stretch (basic residues) spans 1–11 (MAASRKGKAVK). A disordered region spans residues 1-37 (MAASRKGKAVKAVKQEDLRRLMQETRRDSGRQKRVES). The span at 13-36 (VKQEDLRRLMQETRRDSGRQKRVE) shows a compositional bias: basic and acidic residues. The C2H2-type zinc-finger motif lies at 50–72 (CALCDAPVKNALLWQTHVLGKQH). Low complexity predominate over residues 83 to 108 (TAPAHTPAPAHTPAHTPAAASSSSST). 3 disordered regions span residues 83–214 (TAPA…PVRD), 237–257 (EMRQVNSASDAIVAEDDEEGR), and 276–309 (EELRAKQETARSRRRSQRREEEPMQEEEPLEEEE). Polar residues predominate over residues 180 to 195 (HSGSVSKAEQQESQEP). Positions 224–295 (KDQLEREWEE…RSRRRSQRRE (72 aa)) form a coiled coil. Residues 276–286 (EELRAKQETAR) are compositionally biased toward basic and acidic residues. Positions 298–309 (PMQEEEPLEEEE) are enriched in acidic residues.

The protein resides in the nucleus. It is found in the chromosome. Its subcellular location is the nucleus speckle. In terms of biological role, may act as an important regulator of the cell cycle that participates in the maintenance of genome integrity. The sequence is that of Zinc finger protein 830 from Danio rerio (Zebrafish).